A 453-amino-acid chain; its full sequence is GTPase Der (453 aa).

2 consecutive EngA-type G domains span residues 4 to 169 (PIVA…PPTT) and 177 to 352 (IKIA…EEHK). GTP is bound by residues 10–17 (GRPNVGKS), 57–61 (DTGGL), 120–123 (NKCE), 183–190 (GRPNVGKS), 230–234 (DTAGI), and 295–298 (NKWD). In terms of domain architecture, KH-like spans 353–438 (RRVSTSVINE…PIRLLWRSKK (86 aa)).

Belongs to the TRAFAC class TrmE-Era-EngA-EngB-Septin-like GTPase superfamily. EngA (Der) GTPase family. As to quaternary structure, associates with the 50S ribosomal subunit.

Functionally, GTPase that plays an essential role in the late steps of ribosome biogenesis. This is GTPase Der from Trichormus variabilis (strain ATCC 29413 / PCC 7937) (Anabaena variabilis).